We begin with the raw amino-acid sequence, 804 residues long: Endoplasmin (804 aa).

Residues 1 to 21 form the signal peptide; that stretch reads MRVLWVLGLCCVLLTFGFVRA. An SRT pseudosubstrate motif motif is present at residues 42 to 44; the sequence is SRT. An N-linked (GlcNAc...) asparagine glycan is attached at Asn62. Residue Ser64 is modified to Phosphoserine. A glycan (N-linked (GlcNAc...) asparagine) is linked at Asn107. 3 residues coordinate ATP: Asn107, Asp149, and Asn162. Lys168 bears the N6-(2-hydroxyisobutyryl)lysine mark. The residue at position 172 (Ser172) is a Phosphoserine. Phe199 lines the ATP pocket. An N-linked (GlcNAc...) asparagine glycan is attached at Asn217. The disordered stretch occupies residues 288 to 323; that stretch reads TVEEPLEEDETAQEEKEEADDEAAVEEEEEEKKPKT. Residues 289-317 show a composition bias toward acidic residues; the sequence is VEEPLEEDETAQEEKEEADDEAAVEEEEE. Ser403 is modified (phosphoserine). Lys404 is modified (N6-succinyllysine). N-linked (GlcNAc...) asparagine glycosylation is present at Asn445. A Phosphoserine modification is found at Ser447. The residue at position 479 (Lys479) is an N6-acetyllysine. Residues Asn481 and Asn502 are each glycosylated (N-linked (GlcNAc...) asparagine). An N6-succinyllysine modification is found at Lys633. Residues 749-804 form a disordered region; the sequence is IDPEAQVEEEPEEEPEDTTEDTTDDSEQDEEETDAGAEEEEEEQETEKEPTEKDEL. Positions 753-794 are enriched in acidic residues; it reads AQVEEEPEEEPEDTTEDTTDDSEQDEEETDAGAEEEEEEQET. Over residues 795–804 the composition is skewed to basic and acidic residues; it reads EKEPTEKDEL. The Prevents secretion from ER motif lies at 801–804; the sequence is KDEL.

This sequence belongs to the heat shock protein 90 family. Homodimer; disulfide-linked. Component of an EIF2 complex at least composed of CELF1/CUGBP1, CALR, CALR3, EIF2S1, EIF2S2, HSP90B1 and HSPA5. Part of a large chaperone multiprotein complex comprising DNAJB11, HSP90B1, HSPA5, HYOU, PDIA2, PDIA4, PDIA6, PPIB, SDF2L1, UGGT1 and very small amounts of ERP29, but not, or at very low levels, CALR nor CANX. Interacts with AIMP1; regulates its retention in the endoplasmic reticulum. Hyperglycosylated form interacts with OS9; promoting its degradation by the endoplasmic reticulum associated degradation (ERAD). Interacts with CNPY3. This interaction is disrupted in the presence of ATP. Interacts with TLR4 and TLR9, but not with TLR3. Interacts with MZB1 in a calcium-dependent manner. Interacts with METTL23. Interacts with IL1B; the interaction facilitates cargo translocation into the ERGIC. Interacts with EIF2AK3. Phosphorylated by CK2. Post-translationally, N-glycosylated cotranslationally at Asn-217 by STT3A-containing OST-A complex: this glycosylation is constitutive. In response to various stress, 5 additional facultative sites (Asn-62, Asn-107, Asn-445, Asn-481 and Asn-502) can be glycosylated post-translationally by STT3B-containing OST-B complex, leading to a hyperglycosylated form that is degraded by the ER-associated degradation (ERAD) pathway. In normal conditions, the OST-A complex together with CCDC134 prevent glycosylation at facultative sites during protein folding, thereby preventing hyperglycosylation. Mechanistically, nascent HSP90B1 is tethered during translation to a specialized CCDC134-containing translocon that forms a microenvironment for its folding, in which STT3A associates with the SRT pseudosubstrate motif, and prevents access to facultative glycosylation sites until folding is completed, rendering its facultative sites inaccessible to the OST-B complex.

It localises to the endoplasmic reticulum lumen. It is found in the sarcoplasmic reticulum lumen. Its subcellular location is the melanosome. The catalysed reaction is ATP + H2O = ADP + phosphate + H(+). Functionally, ATP-dependent chaperone involved in the processing of proteins in the endoplasmic reticulum, regulating their transport. Together with MESD, acts as a modulator of the Wnt pathway by promoting the folding of LRP6, a coreceptor of the canonical Wnt pathway. When associated with CNPY3, required for proper folding of Toll-like receptors. Promotes folding and trafficking of TLR4 to the cell surface. May participate in the unfolding of cytosolic leaderless cargos (lacking the secretion signal sequence) such as the interleukin 1/IL-1 to facilitate their translocation into the ERGIC (endoplasmic reticulum-Golgi intermediate compartment) and secretion; the translocation process is mediated by the cargo receptor TMED10. The chain is Endoplasmin from Rattus norvegicus (Rat).